Consider the following 387-residue polypeptide: MGNCLDSSARVGNRESTFGGSSRISRKPNQSSRLSSLTIPSYSNNSFTTSSWSNLTPRSEGELLPSPTLKAFTFNELKTATRNFKPNSMIGEGGFGCVYKGWIGERSLSPSKPGSGMVVAVKKLKSEGFQGHKEWLTEVHYLGRLHHMNLVKLIGYCLEGEKRLLVYEYMPKGSLENHLFRRGAEPIPWKTRMKVAFSAARGLSFLHEAKVIYRDFKASNILLDVDFNAKLSDFGLAKAGPTGDRTHVTTQVIGTQGYAAPEYIATGRLTSKSDVYSFGVVLLELLSGRPTLDKSKVGVERNLVDWAIPYLVDRRKVFRIMDTKLGGQYPHKGACAAANIALRCLNTEPKLRPDMADVLSTLQQLETSSKKMGSTQNIVMSPSSHMS.

A disordered region spans residues 1-37 (MGNCLDSSARVGNRESTFGGSSRISRKPNQSSRLSSL). The N-myristoyl glycine moiety is linked to residue Gly-2. Cys-4 is lipidated: S-palmitoyl cysteine. Polar residues predominate over residues 14-37 (RESTFGGSSRISRKPNQSSRLSSL). Thr-73 bears the Phosphothreonine mark. One can recognise a Protein kinase domain in the interval 84–365 (FKPNSMIGEG…ADVLSTLQQL (282 aa)). Residues 90–98 (IGEGGFGCV) and Lys-122 each bind ATP. The residue at position 167 (Tyr-167) is a Phosphotyrosine. Asp-215 serves as the catalytic Proton acceptor. Ser-219 bears the Phosphoserine mark. Phosphothreonine occurs at positions 250 and 255. Residue Tyr-263 is modified to Phosphotyrosine. Residues 368–387 (SSKKMGSTQNIVMSPSSHMS) form a disordered region.

This sequence belongs to the protein kinase superfamily. Ser/Thr protein kinase family.

Its subcellular location is the cell membrane. It carries out the reaction L-seryl-[protein] + ATP = O-phospho-L-seryl-[protein] + ADP + H(+). The enzyme catalyses L-threonyl-[protein] + ATP = O-phospho-L-threonyl-[protein] + ADP + H(+). Its function is as follows. May be involved in plant defense signaling. The protein is Probable serine/threonine-protein kinase PBL18 of Arabidopsis thaliana (Mouse-ear cress).